Consider the following 489-residue polypeptide: Pluviatolide synthase (489 aa).

Residues Ser-6–Leu-26 traverse the membrane as a helical segment. Cys-432 lines the heme pocket.

This sequence belongs to the cytochrome P450 family. It depends on heme as a cofactor.

The protein resides in the membrane. It catalyses the reaction (-)-matairesinol + reduced [NADPH--hemoprotein reductase] + O2 = (-)-pluviatolide + oxidized [NADPH--hemoprotein reductase] + 2 H2O + H(+). It functions in the pathway aromatic compound metabolism; phenylpropanoid biosynthesis. In terms of biological role, cytochrome P450 involved in the biosynthesis of etoposide, a chemotherapeutic compound of the topoisomerase inhibitor family. Catalyzes the conversion of matairesinol to pluviatolide. This Podophyllum peltatum (American mandrake) protein is Pluviatolide synthase.